Reading from the N-terminus, the 359-residue chain is 3-dehydroquinate synthase (359 aa).

Residues 71–76 (DGEQFK), 105–109 (GVIGD), 129–130 (TT), Lys-142, Lys-151, and 169–172 (CLQT) contribute to the NAD(+) site. Positions 184, 247, and 264 each coordinate Zn(2+).

It belongs to the sugar phosphate cyclases superfamily. Dehydroquinate synthase family. It depends on Co(2+) as a cofactor. Zn(2+) is required as a cofactor. NAD(+) serves as cofactor.

The protein localises to the cytoplasm. The enzyme catalyses 7-phospho-2-dehydro-3-deoxy-D-arabino-heptonate = 3-dehydroquinate + phosphate. It functions in the pathway metabolic intermediate biosynthesis; chorismate biosynthesis; chorismate from D-erythrose 4-phosphate and phosphoenolpyruvate: step 2/7. Functionally, catalyzes the conversion of 3-deoxy-D-arabino-heptulosonate 7-phosphate (DAHP) to dehydroquinate (DHQ). The chain is 3-dehydroquinate synthase from Shewanella sp. (strain MR-4).